A 559-amino-acid chain; its full sequence is Formate--tetrahydrofolate ligase (559 aa).

68–75 contacts ATP; it reads TPAGEGKS.

Belongs to the formate--tetrahydrofolate ligase family.

It catalyses the reaction (6S)-5,6,7,8-tetrahydrofolate + formate + ATP = (6R)-10-formyltetrahydrofolate + ADP + phosphate. It participates in one-carbon metabolism; tetrahydrofolate interconversion. This chain is Formate--tetrahydrofolate ligase, found in Lactobacillus gasseri (strain ATCC 33323 / DSM 20243 / BCRC 14619 / CIP 102991 / JCM 1131 / KCTC 3163 / NCIMB 11718 / NCTC 13722 / AM63).